Consider the following 212-residue polypeptide: Large ribosomal subunit protein uL3 (212 aa).

It belongs to the universal ribosomal protein uL3 family. As to quaternary structure, part of the 50S ribosomal subunit. Forms a cluster with proteins L14 and L19.

In terms of biological role, one of the primary rRNA binding proteins, it binds directly near the 3'-end of the 23S rRNA, where it nucleates assembly of the 50S subunit. In Ruminiclostridium cellulolyticum (strain ATCC 35319 / DSM 5812 / JCM 6584 / H10) (Clostridium cellulolyticum), this protein is Large ribosomal subunit protein uL3.